The following is a 563-amino-acid chain: Protein NRT1/ PTR FAMILY 5.9 (563 aa).

Residues 56-76 (TWAGFTSMLPLFSAPLADTYW) traverse the membrane as a helical segment. Thr81 is modified (phosphothreonine). Helical transmembrane passes span 82-102 (ILASSSVYFVGLVGLTWTAFA), 110-130 (TISSYFLYSSLCLVSIGLGVL), 168-188 (FFQLWYFGVCTGSLMGVTVMA), 194-214 (FGWVLGFAIPGIVIFLSILVF), 317-337 (FPIWMMLLMFAVIFQLPATFF), 362-382 (TITLSIILLMPLYDKILIPIT), 394-414 (VMERMGVGMFLSIIAIVIAAI), 441-461 (IFWLLPQYILLGISDIFTVVG), 479-499 (FALYTSVFGVGSFVSAALISI), and 528-548 (WLLALTSTISFVVYIFLCKFF).

This sequence belongs to the major facilitator superfamily. Proton-dependent oligopeptide transporter (POT/PTR) (TC 2.A.17) family. Expressed in roots and flowers.

It is found in the membrane. In Arabidopsis thaliana (Mouse-ear cress), this protein is Protein NRT1/ PTR FAMILY 5.9 (NPF5.9).